We begin with the raw amino-acid sequence, 620 residues long: MSLDIKKYPTLVLADNPMELRQLPKESLVALCDELRQFLLDSVSRSSGHFASGLGTVELTVALHYVYNTPFDRLIWDVGHQAYPHKILTGRRDRIATIRQRNGLHPFPWRGESEYDQLSVGHSSTSISAGLGMAVAAEHEGLGRRTVCVIGDGAITAGMAFEAMNHAGDIKSDLLVVLNDNEMSISENVGALNNHLAQILSGKLYSTLREGGKKVLSGIPPIKELVKRTEEHIKGMVVPGTLFEELGFNYIGPVDGHDVQGLVQTLKNMRAKKGPQLLHIMTKKGRGYAPAEKDPISWHAVPKFDPHMGTLPKSGDGCPTYSAIFGDWLCATAADDDKLMAITPAMREGSGMVAFSRQYPRQYFDVAIAEQHAVTFAAGLAIGGYHPVVAIYSTFLQRAYDQVIHDVAIQNLPVLFAIDRGGVVGADGQTHQGAFDLSYLRCIPNMVIMTPSDENECRLMLHTGYHYQAGPSTVRYPRGNSTGAPLTDLHELPLGKGVVHRQGAGVAILNFGTLLPQAEHAAQAINATLVDMRFVKPLDDTLISELAASHQALVTVEENAIMGGAGSGVNEYVMQQRLQVPVLNIGLPDHFIPQGSQEEIRADLGLDGAGIQRQIKDWLA.

Residues His80 and 121 to 123 each bind thiamine diphosphate; that span reads GHS. A Mg(2+)-binding site is contributed by Asp152. Residues 153–154, Asn181, Tyr288, and Glu370 contribute to the thiamine diphosphate site; that span reads GA. Asn181 provides a ligand contact to Mg(2+).

It belongs to the transketolase family. DXPS subfamily. Homodimer. Mg(2+) is required as a cofactor. Thiamine diphosphate serves as cofactor.

The catalysed reaction is D-glyceraldehyde 3-phosphate + pyruvate + H(+) = 1-deoxy-D-xylulose 5-phosphate + CO2. The protein operates within metabolic intermediate biosynthesis; 1-deoxy-D-xylulose 5-phosphate biosynthesis; 1-deoxy-D-xylulose 5-phosphate from D-glyceraldehyde 3-phosphate and pyruvate: step 1/1. Its function is as follows. Catalyzes the acyloin condensation reaction between C atoms 2 and 3 of pyruvate and glyceraldehyde 3-phosphate to yield 1-deoxy-D-xylulose-5-phosphate (DXP). The chain is 1-deoxy-D-xylulose-5-phosphate synthase from Sodalis glossinidius (strain morsitans).